A 308-amino-acid polypeptide reads, in one-letter code: B3 domain-containing protein REM23 (308 aa).

The segment at residues 19–114 (FFKVLKRSDM…SFTVKIFNKD (96 aa)) is a DNA-binding region (TF-B3 1). The segment at 117-198 (EMMQPPQSRA…TERTQNSKRT (82 aa)) is disordered. A compositionally biased stretch (polar residues) spans 121 to 133 (PPQSRASFASSSR). The span at 134-145 (VKTEQDVKREEE) shows a compositional bias: basic and acidic residues. Positions 149–166 (SSDSRSRGPTTAAETNRG) are enriched in polar residues. Residues 168–177 (SYKRKLNFGK) are compositionally biased toward basic residues. The span at 178 to 198 (KKAEETQTYKRTERTQNSKRT) shows a compositional bias: basic and acidic residues. The segment at residues 216–308 (VAGFKIFISK…LELLLVVSKP (93 aa)) is a DNA-binding region (TF-B3 2).

It is found in the nucleus. The protein is B3 domain-containing protein REM23 (REM23) of Arabidopsis thaliana (Mouse-ear cress).